The sequence spans 258 residues: Small ribosomal subunit protein mS23 (258 aa).

Belongs to the mitochondrion-specific ribosomal protein mS23 family. Component of the mitochondrial small ribosomal subunit.

It localises to the mitochondrion. This chain is Small ribosomal subunit protein mS23, found in Aspergillus fumigatus (strain CBS 144.89 / FGSC A1163 / CEA10) (Neosartorya fumigata).